A 469-amino-acid polypeptide reads, in one-letter code: Keratin, type I cytoskeletal 16 (469 aa).

The tract at residues Met-1–Ile-20 is disordered. The tract at residues Met-1–Ser-112 is head. The segment at Glu-113–Trp-148 is coil 1A. The 312-residue stretch at Glu-113–Ser-424 folds into the IF rod domain. Positions Tyr-149–Thr-166 are linker 1. The coil 1B stretch occupies residues Ile-167 to Leu-258. The segment at Arg-259–Ile-281 is linker 12. The tract at residues Leu-282 to Glu-420 is coil 2. A tail region spans residues Asn-421 to Asp-469. Positions Ile-422–Asp-469 are disordered. 2 stretches are compositionally biased toward low complexity: residues His-423–Ser-444 and Gln-454–Asp-469.

The protein belongs to the intermediate filament family. In terms of assembly, heterodimer of a type I and a type II keratin. KRT16 associates with KRT6 isomers (KRT6A or KRT6B). Interacts with TCHP. Interacts with TRADD. In terms of tissue distribution, expressed in the epithelia of the tongue, upper and lower palate, footpad, proximal nail fold and nail bed, penile spine, sweat gland ducts, and back epidermis (at protein level). Expressed in upper suprabasal layers of the corneal epithelium (at protein level). Expressed in internal stratified epithelia in the esophagus and vagina (at protein level). Expressed in transitional stratified squamous epithelia in the forestomach, anal canal, and nasal cavity (at protein level). Expressed in transitional epithelia of the ureter, bladder and urethra (at protein level). In mature hair follicles, expressed in the companion layer of the outer root sheath during anagen and in the club hair sheath during catagen and telogen (at protein level).

In terms of biological role, epidermis-specific type I keratin that plays a key role in skin. Acts as a regulator of innate immunity in response to skin barrier breach: required for some inflammatory checkpoint for the skin barrier maintenance. This chain is Keratin, type I cytoskeletal 16 (Krt16), found in Mus musculus (Mouse).